A 219-amino-acid polypeptide reads, in one-letter code: ATP-dependent Clp protease proteolytic subunit 3 (219 aa).

Ser112 serves as the catalytic Nucleophile. The active site involves His137.

The protein belongs to the peptidase S14 family. In terms of assembly, fourteen ClpP subunits assemble into 2 heptameric rings which stack back to back to give a disk-like structure with a central cavity, resembling the structure of eukaryotic proteasomes.

It localises to the cytoplasm. It carries out the reaction Hydrolysis of proteins to small peptides in the presence of ATP and magnesium. alpha-casein is the usual test substrate. In the absence of ATP, only oligopeptides shorter than five residues are hydrolyzed (such as succinyl-Leu-Tyr-|-NHMec, and Leu-Tyr-Leu-|-Tyr-Trp, in which cleavage of the -Tyr-|-Leu- and -Tyr-|-Trp bonds also occurs).. In terms of biological role, cleaves peptides in various proteins in a process that requires ATP hydrolysis. Has a chymotrypsin-like activity. Plays a major role in the degradation of misfolded proteins. The chain is ATP-dependent Clp protease proteolytic subunit 3 from Streptomyces avermitilis (strain ATCC 31267 / DSM 46492 / JCM 5070 / NBRC 14893 / NCIMB 12804 / NRRL 8165 / MA-4680).